The chain runs to 491 residues: Ran-binding protein 3 (491 aa).

Residues 1–10 (MADLANEEKP) are compositionally biased toward basic and acidic residues. 2 disordered regions span residues 1–177 (MADL…HCEE) and 255–292 (VLSP…KKES). N-acetylalanine is present on alanine 2. Residues lysine 9 and lysine 21 each carry the N6-acetyllysine modification. Residues serine 32, serine 33, and serine 40 each carry the phosphoserine modification. Residues 49 to 57 (PPVKRERTS) carry the Nuclear localization signal motif. Positions 51 to 67 (VKRERTSSLTHSEEKSS) are enriched in basic and acidic residues. Phosphothreonine is present on threonine 56. At serine 58 the chain carries Phosphoserine. 2 stretches are compositionally biased toward polar residues: residues 111–124 (VLSQ…TNGV) and 133–149 (PATS…SPSE). Serine 146 bears the Phosphoserine mark. The span at 152–162 (EETHTLEEKVP) shows a compositional bias: basic and acidic residues. Phosphoserine occurs at positions 257, 277, 279, and 296. Positions 275-286 (AQSGSESSSQEA) are enriched in low complexity. The region spanning 302 to 442 (KATAWTCLLE…LALRSRAEQE (141 aa)) is the RanBD1 domain. A disordered region spans residues 438 to 491 (RAEQEQEAKAPPPEPGATRATEEEDSDEDAVLAPSGVTGAGTGDEGDGQAPGST). The residue at position 463 (serine 463) is a Phosphoserine.

Interacts with CHC1 in a Ran-stimulated manner. Interacts with XPO1. Interacts (via its C-terminal R domain) with SMAD2 (dephosphorylated form via its MH1 and MH2 domains); the interaction results in the nuclear export of SMAD2 and termination of the TGF-beta signaling. Interacts (via its C-terminal R domain) with SMAD3 (dephosphorylated form via its MH1 domain); the interaction results in the nuclear export of SMAD3 and termination of the TGF-beta signaling. Phosphorylation at Ser-58 promotes its import into the nucleus.

Its subcellular location is the cytoplasm. It is found in the nucleus. Its function is as follows. Acts as a cofactor for XPO1/CRM1-mediated nuclear export, perhaps as export complex scaffolding protein. Bound to XPO1/CRM1, stabilizes the XPO1/CRM1-cargo interaction. In the absence of Ran-bound GTP prevents binding of XPO1/CRM1 to the nuclear pore complex. Binds to CHC1/RCC1 and increases the guanine nucleotide exchange activity of CHC1/RCC1. Recruits XPO1/CRM1 to CHC1/RCC1 in a Ran-dependent manner. Negative regulator of TGF-beta signaling through interaction with the R-SMAD proteins, SMAD2 and SMAD3, and mediating their nuclear export. The chain is Ran-binding protein 3 (Ranbp3) from Mus musculus (Mouse).